The sequence spans 364 residues: RNA-binding protein ZC3H11 (364 aa).

The C3H1-type zinc-finger motif lies at 64-92 (RYKTKLCKNFVQYGTCPYDIRCMFAHGEE). Positions 194-199 (VRHNPY) match the MKT1-binding motif motif. Positions 340-364 (EQSQSHLKREGNEGRGEGLHMFLSL) are disordered. A compositionally biased stretch (basic and acidic residues) spans 346–357 (LKREGNEGRGEG).

Interacts (via MKT1-binding motif) with MKT1. Interacts with PBP1 (via C-terminus); the interaction is direct. In terms of processing, phosphorylated at the N-terminus. CK1.2-dependent phosphorylation may lead to proteasome-dependent degradation of ZC3H11 in absence of stress.

It is found in the cytoplasm. RNA-binding protein involved in regulation of mRNA stability. Binds AU-rich regions in the 3'-UTR of mRNAs and promotes their stabilization by recruiting a MKT1-containing complex. Stabilizes chaperone mRNAs during stress that causes an accumulation of misfolded or unfolded proteins in the cytoplasm. This is RNA-binding protein ZC3H11 from Trypanosoma brucei brucei (strain 927/4 GUTat10.1).